The primary structure comprises 1333 residues: Xanthine dehydrogenase/oxidase (1333 aa).

A 2Fe-2S ferredoxin-type domain is found at 4–91 (DKLVFFVNGR…HVAVTTVEGI (88 aa)). Positions 43, 48, 51, 73, 113, 116, 148, and 150 each coordinate [2Fe-2S] cluster. The FAD-binding PCMH-type domain maps to 229–414 (FEGERVTWIQ…LSIEIPYSRE (186 aa)). FAD-binding positions include 257–264 (LVVGNTEI), F337, 347–351 (SVGGN), D360, L404, and K422. 2 disulfide bridges follow: C509/C1318 and C536/C993. Residues Q768 and F799 each contribute to the Mo-molybdopterin site. Substrate is bound by residues E803 and R881. R913 contributes to the Mo-molybdopterin binding site. Substrate-binding residues include F915 and T1011. Position 1080 (A1080) interacts with Mo-molybdopterin. Residue E1262 is the Proton acceptor of the active site.

Belongs to the xanthine dehydrogenase family. As to quaternary structure, homodimer. Interacts with BTN1A1. It depends on [2Fe-2S] cluster as a cofactor. Requires FAD as cofactor. Mo-molybdopterin serves as cofactor. In terms of processing, subject to partial proteolysis; this alters the enzyme from the dehydrogenase form (D) to the oxidase form (O). Post-translationally, contains sulfhydryl groups that are easily oxidized (in vitro); this alters the enzyme from the dehydrogenase form (D) to the oxidase form (O). In terms of tissue distribution, detected in milk (at protein level).

The protein resides in the cytoplasm. It localises to the peroxisome. It is found in the secreted. The catalysed reaction is xanthine + NAD(+) + H2O = urate + NADH + H(+). The enzyme catalyses hypoxanthine + NAD(+) + H2O = xanthine + NADH + H(+). It catalyses the reaction xanthine + O2 + H2O = urate + H2O2. With respect to regulation, can be converted from the dehydrogenase form (D) to the oxidase form (O) irreversibly by proteolysis or reversibly through the oxidation of sulfhydryl groups. In terms of biological role, key enzyme in purine degradation. Catalyzes the oxidation of hypoxanthine to xanthine. Catalyzes the oxidation of xanthine to uric acid. Contributes to the generation of reactive oxygen species. Has also low oxidase activity towards aldehydes (in vitro). The protein is Xanthine dehydrogenase/oxidase (XDH) of Homo sapiens (Human).